A 298-amino-acid polypeptide reads, in one-letter code: N-acetylmuramic acid 6-phosphate etherase (298 aa).

Residues 55 to 218 (IHAQVSGGGR…STGLMIKSGK (164 aa)) enclose the SIS domain. Glutamate 83 (proton donor) is an active-site residue. The active site involves glutamate 114.

The protein belongs to the GCKR-like family. MurNAc-6-P etherase subfamily. As to quaternary structure, homodimer.

It catalyses the reaction N-acetyl-D-muramate 6-phosphate + H2O = N-acetyl-D-glucosamine 6-phosphate + (R)-lactate. It functions in the pathway amino-sugar metabolism; 1,6-anhydro-N-acetylmuramate degradation. The protein operates within amino-sugar metabolism; N-acetylmuramate degradation. It participates in cell wall biogenesis; peptidoglycan recycling. Its function is as follows. Specifically catalyzes the cleavage of the D-lactyl ether substituent of MurNAc 6-phosphate, producing GlcNAc 6-phosphate and D-lactate. Together with AnmK, is also required for the utilization of anhydro-N-acetylmuramic acid (anhMurNAc) either imported from the medium or derived from its own cell wall murein, and thus plays a role in cell wall recycling. In Shigella boydii serotype 18 (strain CDC 3083-94 / BS512), this protein is N-acetylmuramic acid 6-phosphate etherase.